Consider the following 205-residue polypeptide: Holliday junction branch migration complex subunit RuvA (205 aa).

Residues 1–64 are domain I; sequence MIGKLKGTID…EDQLKLFGFL (64 aa). The segment at 65–143 is domain II; it reads SALEREWFRL…AFVGEMAPSI (79 aa). Positions 144–153 are flexible linker; that stretch reads GLKQELGEGV. Residues 153 to 205 form a domain III region; it reads VAAAPVSDAVSALTNLGYSRDQAANAVAAALKNGGEGADSARLIRLGLKELSR.

Belongs to the RuvA family. As to quaternary structure, homotetramer. Forms an RuvA(8)-RuvB(12)-Holliday junction (HJ) complex. HJ DNA is sandwiched between 2 RuvA tetramers; dsDNA enters through RuvA and exits via RuvB. An RuvB hexamer assembles on each DNA strand where it exits the tetramer. Each RuvB hexamer is contacted by two RuvA subunits (via domain III) on 2 adjacent RuvB subunits; this complex drives branch migration. In the full resolvosome a probable DNA-RuvA(4)-RuvB(12)-RuvC(2) complex forms which resolves the HJ.

It localises to the cytoplasm. Its function is as follows. The RuvA-RuvB-RuvC complex processes Holliday junction (HJ) DNA during genetic recombination and DNA repair, while the RuvA-RuvB complex plays an important role in the rescue of blocked DNA replication forks via replication fork reversal (RFR). RuvA specifically binds to HJ cruciform DNA, conferring on it an open structure. The RuvB hexamer acts as an ATP-dependent pump, pulling dsDNA into and through the RuvAB complex. HJ branch migration allows RuvC to scan DNA until it finds its consensus sequence, where it cleaves and resolves the cruciform DNA. This is Holliday junction branch migration complex subunit RuvA from Sinorhizobium medicae (strain WSM419) (Ensifer medicae).